Reading from the N-terminus, the 303-residue chain is US1 protein (303 aa).

A disordered region spans residues 230–284 (IPAPGRPLPRRRPSEGGMRAPRRRSRAPAPARSTAAAATPPRPGDPRAPAARRAG). Residues 256–268 (APAPARSTAAAAT) are compositionally biased toward low complexity.

The protein belongs to the herpesviridae US2 family.

The chain is US1 protein (US1) from Equine herpesvirus 1 (strain Kentucky A) (EHV-1).